Consider the following 447-residue polypeptide: GTPase Der (447 aa).

2 EngA-type G domains span residues 3–167 (PVIA…QLPE) and 180–353 (IRLA…KAAT). GTP-binding positions include 9–16 (GRPNVGKS), 56–60 (DTGGF), 119–122 (NKAE), 186–193 (GRPNVGKS), 233–237 (DTAGL), and 298–301 (NKWD). The KH-like domain occupies 353–438 (TCKMPTPVLT…PLRIEMKTSR (86 aa)).

Belongs to the TRAFAC class TrmE-Era-EngA-EngB-Septin-like GTPase superfamily. EngA (Der) GTPase family. In terms of assembly, associates with the 50S ribosomal subunit.

Functionally, GTPase that plays an essential role in the late steps of ribosome biogenesis. This chain is GTPase Der, found in Paracidovorax citrulli (strain AAC00-1) (Acidovorax citrulli).